The primary structure comprises 420 residues: O-methyltransferase opaF (420 aa).

S-adenosyl-L-methionine is bound by residues 262-263 (GG), Asp-287, and 308-309 (DL). His-328 (proton acceptor) is an active-site residue.

It belongs to the class I-like SAM-binding methyltransferase superfamily. Cation-independent O-methyltransferase family.

It participates in secondary metabolite biosynthesis. O-methyltransferase; part of the gene cluster that mediates the biosynthesis of oxepinamides, derivatives of anthranilyl-containing tripeptides that share an oxepin ring and a fused pyrimidinone moiety. The nonribosomal peptide synthetase (NRPS) opaA assembles the quinazolinone core with D-Phe incorporation. The first adenylation domain (A1) of opaA loads and activates anthranilic acid whereas the second A domain (A2) is for activating of L-Phe, which is then converted to D-form by the E domain. The third A domain (A3) is responsible for L-Ile activation and the terminal condensation domain C3 for cyclization and releasing the NRPS product protuboxepin K. The cytochrome P450 monooxygenase opaB then catalyzes alone the oxepin ring formation to convert protuboxepin K into protuboxepin A. The flavoenzyme opaC installs subsequently one hydroxyl group at the oxepin ring, accompanied by double bond migration, to form 15-epi-oxepinamide E. The epimerase opaE changes the D-Phe residue back to L-form, leading to oxepinamide E, which is further methylated at the hydroxyl group at C-12 by the O-methyltransferase OpaF to yield oxepinamide F. The protein is O-methyltransferase opaF of Aspergillus ustus.